Consider the following 320-residue polypeptide: HPr kinase/phosphorylase (320 aa).

Catalysis depends on residues His-141 and Lys-162. Position 156–163 (156–163) interacts with ATP; sequence GHSGLGKS. Ser-163 is a Mg(2+) binding site. Asp-180 functions as the Proton acceptor; for phosphorylation activity. Proton donor; for dephosphorylation activity in the catalytic mechanism. The segment at 204 to 213 is important for the catalytic mechanism of both phosphorylation and dephosphorylation; sequence LEVRGLGILN. Glu-205 provides a ligand contact to Mg(2+). Arg-248 is a catalytic residue. The important for the catalytic mechanism of dephosphorylation stretch occupies residues 269–274; the sequence is PVAVGR.

It belongs to the HPrK/P family. As to quaternary structure, homohexamer. It depends on Mg(2+) as a cofactor.

The catalysed reaction is [HPr protein]-L-serine + ATP = [HPr protein]-O-phospho-L-serine + ADP + H(+). It carries out the reaction [HPr protein]-O-phospho-L-serine + phosphate + H(+) = [HPr protein]-L-serine + diphosphate. In terms of biological role, catalyzes the ATP- as well as the pyrophosphate-dependent phosphorylation of a specific serine residue in HPr, a phosphocarrier protein of the phosphoenolpyruvate-dependent sugar phosphotransferase system (PTS). HprK/P also catalyzes the pyrophosphate-producing, inorganic phosphate-dependent dephosphorylation (phosphorolysis) of seryl-phosphorylated HPr (P-Ser-HPr). This chain is HPr kinase/phosphorylase, found in Neisseria meningitidis serogroup B (strain ATCC BAA-335 / MC58).